The primary structure comprises 295 residues: MEIRRRPPNPSIKVANLEYAIPHPDSKPKNILEEIVWEKHLEVEIARKKVSLEDLKKKIKDLPKTKNFIDALRNSNSKPALISEIKKASPSRGIIREDFDAKMIGKMYQEGGANCISVLTDKKFFQGGFDVLVEVRKEIIIPILCKDFILYPYQLYQARAAGADAALLIAAILTDSDLKYLSKVAEHLGLTILVEVHDSEELERVLNINVFNLIGINNRNLKSFKTDLEVTKKLAENYANQIKENSITLVSESGLFNREDLDLVKSYGADAVLVGESLMSQEDILGGVKKLIGNL.

It belongs to the TrpC family.

The enzyme catalyses 1-(2-carboxyphenylamino)-1-deoxy-D-ribulose 5-phosphate + H(+) = (1S,2R)-1-C-(indol-3-yl)glycerol 3-phosphate + CO2 + H2O. Its pathway is amino-acid biosynthesis; L-tryptophan biosynthesis; L-tryptophan from chorismate: step 4/5. The polypeptide is Indole-3-glycerol phosphate synthase (Prochlorococcus marinus (strain NATL2A)).